Here is a 221-residue protein sequence, read N- to C-terminus: Abscisic acid receptor PYL1 (221 aa).

Residues 1–11 show a composition bias toward low complexity; it reads MANSESSSSPV. Residues 1-22 form a disordered region; sequence MANSESSSSPVNEEENSQRIST. N-acetylalanine is present on Ala-2. An START-like region spans residues 50-206; it reads YQLGNGRCSS…NLQKLASITE (157 aa). Abscisate-binding positions include Lys-86, 116–121, 143–149, and Glu-171; these read ANTSRE and RLRNYKS. Residues 112 to 116 carry the Gate loop motif; the sequence is SGLPA. The Latch loop motif lies at 142-144; it reads HRL.

It belongs to the PYR/PYL/RCAR abscisic acid intracellular receptor family. In terms of assembly, homodimer. Binds ABA on one subunit only. Interacts with HAB1, ABI1 and ABI2, and possibly with other PP2Cs. Binds to CARs protein in an ABA-independent manner, both at the plasma membrane and in the nucleus. Interacts directly with CAR1 and CAR4.

It is found in the cytoplasm. The protein localises to the nucleus. It localises to the cell membrane. In terms of biological role, receptor for abscisic acid (ABA) required for ABA-mediated responses such as stomatal closure and germination inhibition. Inhibits the activity of group-A protein phosphatases type 2C (PP2Cs) when activated by ABA. Can be activated by both (-)-ABA and (+)-ABA. The sequence is that of Abscisic acid receptor PYL1 (PYL1) from Arabidopsis thaliana (Mouse-ear cress).